Reading from the N-terminus, the 706-residue chain is Translation factor GUF1 homolog, mitochondrial (706 aa).

The 184-residue stretch at 89 to 272 (SRIRNFSIIA…SIVKNVPPPQ (184 aa)) folds into the tr-type G domain. GTP is bound by residues 98-105 (AHIDHGKS), 165-169 (DTPGH), and 219-222 (NKID).

It belongs to the TRAFAC class translation factor GTPase superfamily. Classic translation factor GTPase family. LepA subfamily.

It localises to the mitochondrion inner membrane. It catalyses the reaction GTP + H2O = GDP + phosphate + H(+). Its function is as follows. Promotes mitochondrial protein synthesis. May act as a fidelity factor of the translation reaction, by catalyzing a one-codon backward translocation of tRNAs on improperly translocated ribosomes. Binds to mitochondrial ribosomes in a GTP-dependent manner. This is Translation factor GUF1 homolog, mitochondrial from Thalassiosira pseudonana (Marine diatom).